The sequence spans 1503 residues: Protein Skeletor, isoforms D/E (1503 aa).

A signal peptide spans 1 to 28; that stretch reads MLAMKDKPWLLLFGLLAALSCLASFGDA. 2 DM13 domains span residues 34–143 and 151–258; these read GTKI…VSIP and PQKI…VRLP. A DOMON domain is found at 287–419; it reads LAFEVRWAVA…GAESVVWAIG (133 aa). 4 disordered regions span residues 451–491, 830–857, 1086–1106, and 1426–1503; these read PLPE…NVEP, NPNLNPNHPNQNPIPNPHQKPNVTPTEI, IFNQPGGKGKGDQKPKASSVS, and EFRG…GRRA. Positions 830-840 are enriched in low complexity; that stretch reads NPNLNPNHPNQ. Residues 1452–1491 are compositionally biased toward low complexity; the sequence is SSSSGSTIYPYSSSTGASTSTVSSSASSPLSSSSLRPIST.

Interacts with Chro and Mgtor as part of a macromolecular complex forming the spindle matrix. Chro colocalizes with Skeletor (Skel) on the chromosomes at interphase and on spindle during metaphase.

Its subcellular location is the cytoplasm. The protein resides in the cytoskeleton. It localises to the spindle. It is found in the nucleus. The protein localises to the nucleolus. Its subcellular location is the chromosome. Functionally, provides structural support to stabilize and organize the microtubule spindle during mitosis (within embryonic somatic cells) and meiosis (within spermatocytes). The role in mitosis regulation depends on the Ran pathway. This Drosophila melanogaster (Fruit fly) protein is Protein Skeletor, isoforms D/E.